Reading from the N-terminus, the 403-residue chain is Vitamin D(3) 25-hydroxylase (403 aa).

A heme-binding site is contributed by Cys347.

This sequence belongs to the cytochrome P450 family. Requires heme as cofactor.

The protein resides in the cytoplasm. The enzyme catalyses 5beta-cholestane-3alpha,7alpha,12alpha-triol + 6 reduced [adrenodoxin] + 3 O2 + 5 H(+) = (25R)-3alpha,7alpha,12alpha-trihydroxy-5beta-cholestan-26-oate + 6 oxidized [adrenodoxin] + 4 H2O. Activated by partially methylated beta-cyclodextrin. Its function is as follows. Hydroxylates vitamin D(3) into 25-hydroxyvitamin D(3) and 1-alpha,25-dihydroxyvitamin D(3), its physiologically active forms. It first hydroxylates the C-25 position of vitamin D(3) to form 25-hydroxyvitamin D(3), then subsequently hydroxylates the C-1-alpha position to form 1-alpha,25-dihydroxyvitamin D(3). Also displays 25-hydroxylase activity on vitamin D(2) and 7-dehydrocholesterol. May play a role in the biosynthesis of steroid metabolic intermediates. This chain is Vitamin D(3) 25-hydroxylase, found in Pseudonocardia autotrophica (Amycolata autotrophica).